The primary structure comprises 139 residues: MPQPKPSEQEGESMKASQEPAPQPGTDVVPAAPRKPRKFSKLVLLTASKDSAKVAGAKRKGVHCIMSLGVPGPATLAKALLKTHPEAQRAIEATPLEPEQKRSKQNLDSDGPEDNGGSGVSSSSSEETTVLPEAPSTSP.

2 disordered regions span residues 1–36 and 86–139; these read MPQP…PRKP and EAQR…STSP. Residues 98–107 are compositionally biased toward basic and acidic residues; it reads PEQKRSKQNL. Over residues 120–130 the composition is skewed to low complexity; it reads VSSSSSEETTV.

The sequence is that of FLYWCH family member 2 (Flywch2) from Mus musculus (Mouse).